Consider the following 1072-residue polypeptide: MLGDGKEGTSTIPGFNQIQFEGFYRFIDQGLIEELSKFPKIEDIDHEIEFQLFVETYQLVEPLIKERDAVYESLTYSSELYVSAGLIWKTSRNMQEQRIFIGNIPLMNSLGTSIVNGIYRIVINQILQSPGIYYQSELDHNGISVYTGTIISDWGGRLELEIDKKARIWARVSRKQKISILVLSSAMGSNLREILENVCYPEIFLSFLTDKEKKKIGSKENAILEFYKQFSCVGGDPIFSESLCKELQKKFFHQRCELGRIGRRNINWRLNLNIPQNNIFLLPRDILAAADHLIGMKFGMGTLDDMNHLKNKRIRSVADLLQDQLGLALARLENVVKGTIGGAIRHKLIPTPQNLVTSTPLTTTYESFFGLHPLSQVLDRTNPLTQIVHGRKLSYLGPGGLTGRTANFRIRDIHPSHYGRICPIDTSEGINVGLIGSLSIHARIGDWGSLESPFYELFEKSKKARIRMLFLSPSQDEYYMIAAGNSLALNRGIQEEQAVPARYRQEFLTIAWEEVHLRSILPFQYFSIGASLIPFIEHNDANRALMSSNMQRQAVPLSRSEKCIVGTGLERQVALDSGVPAIAEHEGKILYTDTEKIILSGNGDTFSIPLIMYQRSNKNTCMHQKPQVRRGKYIKKGQILADGAATVGGELSLGKNILVAYMPWEGYNFEDAVLISESLVYDDIYTSFHIRKYEIQTHVTTQGPERITKEIPHLEGRLLRNLDKNGIVMLGSWVETGDILVGKLTPQVAKESSYAPEDRLLRAILGIQVSTSKETCLKLPIGGRGRVIDVRWVQKKGGSSYNPEKIRVYISQKREIKVGDKVAGRHGNKGIISKILPRQDMPYLQDGRPVDMVFNPLGVPSRMNVGQIFECSLGLAGSLLDRHYRIAPFDERYEQEASRKLVFSELYQASKQTANPWVFEPEYPGKSRIFDGRTGDPFEQPVIIGKPYILKLIHQVDDKIHGRSSGHYALVTQQPLRGRSKQGGQRVGEMEVWALEGFGVAHILQEMLTYKSDHIRARQEVLATTIIGGTIPKPEDAPESFRLLVRELRSLALELNHFLVSEKNFQINRKAV.

The protein belongs to the RNA polymerase beta chain family. In plastids the minimal PEP RNA polymerase catalytic core is composed of four subunits: alpha, beta, beta', and beta''. When a (nuclear-encoded) sigma factor is associated with the core the holoenzyme is formed, which can initiate transcription.

It localises to the plastid. The protein localises to the chloroplast. The catalysed reaction is RNA(n) + a ribonucleoside 5'-triphosphate = RNA(n+1) + diphosphate. In terms of biological role, DNA-dependent RNA polymerase catalyzes the transcription of DNA into RNA using the four ribonucleoside triphosphates as substrates. This is DNA-directed RNA polymerase subunit beta from Lobularia maritima (Sweet alyssum).